We begin with the raw amino-acid sequence, 789 residues long: 1-phosphatidylinositol 4,5-bisphosphate phosphodiesterase delta-3 (789 aa).

The region spanning Arg63 to Ala172 is the PH domain. Residues Lys73–Pro101 form a substrate binding region. Ser105 carries the post-translational modification Phosphoserine. 3 consecutive EF-hand domains span residues Arg182–Asp217, Met218–Arg253, and Leu250–Glu285. Asp195, Asn197, Asp199, Lys201, Glu206, Asp231, Ser233, Asn235, Arg237, and Glu242 together coordinate Ca(2+). The PI-PLC X-box domain maps to Gln337 to Lys482. The active site involves His352. Asn353, Glu382, and Asp384 together coordinate Ca(2+). Residue His397 is part of the active site. Glu431 contributes to the Ca(2+) binding site. The disordered stretch occupies residues Ser461–Arg519. Lys480 and Lys482 together coordinate substrate. Over residues Arg488–Asp497 the composition is skewed to basic and acidic residues. Position 496 is a phosphoserine (Ser496). Positions Arg498–Glu513 are enriched in acidic residues. Residues Leu528–Arg644 form the PI-PLC Y-box domain. Residue Ser557 participates in substrate binding. Residue Ser573 is modified to Phosphoserine. Arg584 is a binding site for substrate. Residues Arg644–Ser769 form the C2 domain. Residues Ile683, Asp685, Asn709, Asp738, Tyr739, and Asp740 each contribute to the Ca(2+) site.

Ca(2+) is required as a cofactor. As to expression, present in corneal epithelial cells (at protein level).

Its subcellular location is the membrane. The protein resides in the cytoplasm. It localises to the cleavage furrow. It carries out the reaction a 1,2-diacyl-sn-glycero-3-phospho-(1D-myo-inositol-4,5-bisphosphate) + H2O = 1D-myo-inositol 1,4,5-trisphosphate + a 1,2-diacyl-sn-glycerol + H(+). Its activity is regulated as follows. Strongly activated by phosphatidic acid. Inhibited by phosphatidylethanolamine (PtdEtn), phosphatidylcholine (PtdCho), sphingomyelin and phosphatidylserine (PtdSer). Its function is as follows. Hydrolyzes the phosphatidylinositol 4,5-bisphosphate (PIP2) to generate 2 second messenger molecules diacylglycerol (DAG) and inositol 1,4,5-trisphosphate (IP3). DAG mediates the activation of protein kinase C (PKC), while IP3 releases Ca(2+) from intracellular stores. Essential for trophoblast and placental development. May participate in cytokinesis by hydrolyzing PIP2 at the cleavage furrow. Regulates neurite outgrowth through the inhibition of RhoA/Rho kinase signaling. The protein is 1-phosphatidylinositol 4,5-bisphosphate phosphodiesterase delta-3 of Homo sapiens (Human).